A 300-amino-acid polypeptide reads, in one-letter code: D-alanine--D-alanine ligase (300 aa).

Residues 99 to 293 (KKILKYANIN…FAELLNSIVK (195 aa)) enclose the ATP-grasp domain. 126–181 (IEKIGYPVFVKPNSGGSSVATNLVKDKEGIKEAVELALKYDKEVMIENYTKGEEIT) is a binding site for ATP. Residues aspartate 248, glutamate 260, and asparagine 262 each contribute to the Mg(2+) site.

It belongs to the D-alanine--D-alanine ligase family. It depends on Mg(2+) as a cofactor. Requires Mn(2+) as cofactor.

Its subcellular location is the cytoplasm. It catalyses the reaction 2 D-alanine + ATP = D-alanyl-D-alanine + ADP + phosphate + H(+). It functions in the pathway cell wall biogenesis; peptidoglycan biosynthesis. In terms of biological role, cell wall formation. The chain is D-alanine--D-alanine ligase from Clostridium botulinum (strain Okra / Type B1).